Reading from the N-terminus, the 253-residue chain is ABC transporter D-alanine-binding periplasmic protein (253 aa).

An N-terminal signal peptide occupies residues Met-1–Ala-22. Gly-95, Ser-97, Arg-102, Ala-147, and Glu-191 together coordinate D-alanine.

Belongs to the bacterial solute-binding protein 3 family. As to quaternary structure, monomer.

It localises to the periplasm. In terms of biological role, part of the ABC transporter complex dalSTUV, that imports D-alanine into the cytoplasm. Helps protect the organism from oxidative killing by host neutrophils through sequestration of D-alanine, a substrate that is converted to hydrogen peroxide by the host enzyme DAO (D-amino acid oxidase). DalS shuttles D-alanine from the periplasm to the DalTUV complex situated in the inner membrane and through hydrolysis of ATP, D-alanine is transported across the membrane into the cytoplasm. Not required for the metabolism of D-alanine found in the stem peptide of peptidoglycan. The polypeptide is ABC transporter D-alanine-binding periplasmic protein (Salmonella typhimurium (strain LT2 / SGSC1412 / ATCC 700720)).